We begin with the raw amino-acid sequence, 501 residues long: Pentatricopeptide repeat-containing protein At4g14190, chloroplastic (501 aa).

The transit peptide at M1 to Q88 directs the protein to the chloroplast. PPR repeat units lie at residues S130–D160, S166–P200, I201–R235, D236–L270, and E271–L305.

This sequence belongs to the PPR family. P subfamily.

It localises to the plastid. The protein localises to the chloroplast. The polypeptide is Pentatricopeptide repeat-containing protein At4g14190, chloroplastic (Arabidopsis thaliana (Mouse-ear cress)).